The primary structure comprises 212 residues: Ion-translocating oxidoreductase complex subunit G (212 aa).

Residues 9–29 traverse the membrane as a helical segment; it reads GFLLALFALICTGLVAAVNQQ. Threonine 176 is subject to FMN phosphoryl threonine.

Belongs to the RnfG family. The complex is composed of six subunits: RnfA, RnfB, RnfC, RnfD, RnfE and RnfG. It depends on FMN as a cofactor.

The protein localises to the cell inner membrane. Its function is as follows. Part of a membrane-bound complex that couples electron transfer with translocation of ions across the membrane. The protein is Ion-translocating oxidoreductase complex subunit G of Shewanella baltica (strain OS223).